The following is a 665-amino-acid chain: Lamin-A (665 aa).

N-acetylmethionine is present on Met-1. The segment at Met-1–Glu-29 is head. Ser-18 is modified (phosphoserine). One can recognise an IF rod domain in the interval Glu-27–Leu-383. The interval Asp-30–Ile-66 is coil 1A. The interval Ser-67–Ala-76 is linker 1. Residues Tyr-77–Thr-214 form a coil 1B region. Residues Lys-215–Ala-238 are linker 2. The tract at residues Asp-239 to Leu-383 is coil 2. Disordered stretches follow at residues Glu-381–Glu-441, Asp-550–Asn-581, and Ala-602–Ser-641. The interval Arg-384–Ile-664 is tail. Ser-388 carries the phosphoserine modification. Positions Ile-399–Ala-411 are enriched in low complexity. The short motif at Lys-413–Glu-418 is the Nuclear localization signal element. The LTD domain maps to Ser-425–Arg-542. Residues Phe-427 to Lys-436 are compositionally biased toward polar residues. Positions Gly-605–Gly-630 are enriched in low complexity. At Cys-662 the chain carries Cysteine methyl ester. Cys-662 carries S-farnesyl cysteine lipidation. The propeptide at Ser-663–Met-665 is removed in mature form.

This sequence belongs to the intermediate filament family. Homodimer. Lamin dimers then assemble into dimeric head-to-tail polymers. Ultimately, two head-to-tail polymers assemble laterally into a protofilament with a uniformly shaped rod of 3.5 nm in diameter. Phosphorylation plays a key role in lamin organization, subcellular localization and nuclear envelope disintegration. Phosphorylation by CDK1 at Ser-18 at the onset of mitosis drives lamin disassembly and nuclear envelope breakdown.

The protein resides in the nucleus lamina. It is found in the nucleus envelope. The protein localises to the nucleus. Its subcellular location is the nucleoplasm. It localises to the nucleus matrix. Functionally, lamins are intermediate filament proteins that assemble into a filamentous meshwork, and which constitute the major components of the nuclear lamina, a fibrous layer on the nucleoplasmic side of the inner nuclear membrane. Lamins provide a framework for the nuclear envelope, bridging the nuclear envelope and chromatin, thereby playing an important role in nuclear assembly, chromatin organization, nuclear membrane and telomere dynamics. The structural integrity of the lamina is strictly controlled by the cell cycle, as seen by the disintegration and formation of the nuclear envelope in prophase and telophase, respectively. This chain is Lamin-A (lmna), found in Xenopus laevis (African clawed frog).